An 82-amino-acid polypeptide reads, in one-letter code: Large ribosomal subunit protein uL23 (82 aa).

It belongs to the universal ribosomal protein uL23 family. Part of the 50S ribosomal subunit. Contacts protein L29.

In terms of biological role, binds to 23S rRNA. One of the proteins that surrounds the polypeptide exit tunnel on the outside of the ribosome. In Sulfurisphaera tokodaii (strain DSM 16993 / JCM 10545 / NBRC 100140 / 7) (Sulfolobus tokodaii), this protein is Large ribosomal subunit protein uL23.